Reading from the N-terminus, the 100-residue chain is Small ribosomal subunit protein uS17 (100 aa).

This sequence belongs to the universal ribosomal protein uS17 family. As to quaternary structure, part of the 30S ribosomal subunit.

In terms of biological role, one of the primary rRNA binding proteins, it binds specifically to the 5'-end of 16S ribosomal RNA. This chain is Small ribosomal subunit protein uS17, found in Fervidobacterium nodosum (strain ATCC 35602 / DSM 5306 / Rt17-B1).